The primary structure comprises 162 residues: uncharacterized protein (162 aa).

This is an uncharacterized protein from Acidianus sp. F28 (AFV-2).